A 41-amino-acid polypeptide reads, in one-letter code: Minor histocompatibility protein HB-1 (41 aa).

Residues 9–17 are loss of recognition by cytotoxic T lymphocyte (CTL); the sequence is EEKRGSLHV.

In terms of assembly, HB-1 forms a complex with MHC class I HLA-B44. Expressed in acute lymphoblastic leukemia B-cells and Epstein-Barr virus-transformed B-cells.

In terms of biological role, precursor of the histocomplatibility antigen HB-1. More generally, minor histocomplatibility antigens (mHags) refer to immunogenic peptide which, when complexed with MHC, can generate an immune response after recognition by specific T-cells. The peptides are derived from polymorphic intracellular proteins, which are cleaved by normal pathways of antigen processing. The binding of these peptides to MHC class I or class II molecules and its expression on the cell surface can stimulate T-cell responses and thereby trigger graft rejection or graft-versus-host disease (GVHD) after hematopoietic stem cell transplantation from HLA-identical sibling donor. GVHD is a frequent complication after bone marrow transplantation (BMT), due to mismatch of minor histocomplatibility antigen in HLA-matched sibling marrow transplants. HB-1 is presented on the cell surface by MHC class I HLA-B44. This complex specifically elicits donor-cytotoxic T lymphocyte (CTL) reactivity in B-cell acute lymphoblastic leukemia (B-ALL) after treatment by HLA-identical allogenic bone marrow transplantation (BMT). It induces cell recognition and lysis by CTL. However, HB-1 restricted expression in B-ALL cells and not in normal tissues may allow a specific CTL reactivity against B-ALL without the risk of evoking graft-versus-host disease. In Homo sapiens (Human), this protein is Minor histocompatibility protein HB-1 (HMHB1).